The sequence spans 330 residues: tRNA(Ile)-lysidine synthase (330 aa).

31-36 lines the ATP pocket; sequence SGGQDS.

It belongs to the tRNA(Ile)-lysidine synthase family.

The protein resides in the cytoplasm. It carries out the reaction cytidine(34) in tRNA(Ile2) + L-lysine + ATP = lysidine(34) in tRNA(Ile2) + AMP + diphosphate + H(+). Ligates lysine onto the cytidine present at position 34 of the AUA codon-specific tRNA(Ile) that contains the anticodon CAU, in an ATP-dependent manner. Cytidine is converted to lysidine, thus changing the amino acid specificity of the tRNA from methionine to isoleucine. This is tRNA(Ile)-lysidine synthase from Synechocystis sp. (strain ATCC 27184 / PCC 6803 / Kazusa).